Reading from the N-terminus, the 230-residue chain is CRP-like protein Clp (230 aa).

Position 18 to 139 (18 to 139) interacts with a nucleoside 3',5'-cyclic phosphate; the sequence is PSLALDAGTI…APKILYAIGV (122 aa). The HTH crp-type domain occupies 158–230; the sequence is LDVTDRIVRT…GKTVVLYGTR (73 aa). Residues 190–209 constitute a DNA-binding region (H-T-H motif); it reads RQELARLVGCSREMAGRVLK.

As to quaternary structure, homodimer.

The protein resides in the cytoplasm. Its activity is regulated as follows. Allosterically inhibited by cyclic di-GMP (c-di-GMP), which binds to Clp and abolishes its ability to bind its target gene promoter. Its function is as follows. Global transcriptional regulator that regulates virulence factors production by activating or repressing the expression of a large set of genes in diffusible signal factor (DSF) pathway. The chain is CRP-like protein Clp (clp) from Xanthomonas oryzae pv. oryzae (strain MAFF 311018).